We begin with the raw amino-acid sequence, 406 residues long: 4-hydroxy-3-methylbut-2-en-1-yl diphosphate synthase (ferredoxin) (406 aa).

[4Fe-4S] cluster-binding residues include Cys-315, Cys-318, Cys-349, and Glu-356.

The protein belongs to the IspG family. The cofactor is [4Fe-4S] cluster.

The catalysed reaction is (2E)-4-hydroxy-3-methylbut-2-enyl diphosphate + 2 oxidized [2Fe-2S]-[ferredoxin] + H2O = 2-C-methyl-D-erythritol 2,4-cyclic diphosphate + 2 reduced [2Fe-2S]-[ferredoxin] + H(+). Its pathway is isoprenoid biosynthesis; isopentenyl diphosphate biosynthesis via DXP pathway; isopentenyl diphosphate from 1-deoxy-D-xylulose 5-phosphate: step 5/6. Its function is as follows. Converts 2C-methyl-D-erythritol 2,4-cyclodiphosphate (ME-2,4cPP) into 1-hydroxy-2-methyl-2-(E)-butenyl 4-diphosphate. The polypeptide is 4-hydroxy-3-methylbut-2-en-1-yl diphosphate synthase (ferredoxin) (Gloeothece citriformis (strain PCC 7424) (Cyanothece sp. (strain PCC 7424))).